A 288-amino-acid polypeptide reads, in one-letter code: Putative branched-chain-amino-acid aminotransferase (288 aa).

Position 146 is an N6-(pyridoxal phosphate)lysine (lysine 146).

The protein belongs to the class-IV pyridoxal-phosphate-dependent aminotransferase family. Requires pyridoxal 5'-phosphate as cofactor.

It carries out the reaction L-leucine + 2-oxoglutarate = 4-methyl-2-oxopentanoate + L-glutamate. It catalyses the reaction L-isoleucine + 2-oxoglutarate = (S)-3-methyl-2-oxopentanoate + L-glutamate. The catalysed reaction is L-valine + 2-oxoglutarate = 3-methyl-2-oxobutanoate + L-glutamate. It participates in amino-acid biosynthesis; L-isoleucine biosynthesis; L-isoleucine from 2-oxobutanoate: step 4/4. It functions in the pathway amino-acid biosynthesis; L-leucine biosynthesis; L-leucine from 3-methyl-2-oxobutanoate: step 4/4. Its pathway is amino-acid biosynthesis; L-valine biosynthesis; L-valine from pyruvate: step 4/4. In terms of biological role, acts on leucine, isoleucine and valine. The sequence is that of Putative branched-chain-amino-acid aminotransferase (ilvE) from Methanocaldococcus jannaschii (strain ATCC 43067 / DSM 2661 / JAL-1 / JCM 10045 / NBRC 100440) (Methanococcus jannaschii).